The sequence spans 962 residues: Protease 3 (962 aa).

Positions 1–23 (MPRSTWFKALLLFVALWAPLSQA) are cleaved as a signal peptide. Position 88 (histidine 88) interacts with Zn(2+). Glutamate 91 functions as the Proton acceptor in the catalytic mechanism. Positions 92 and 169 each coordinate Zn(2+).

The protein belongs to the peptidase M16 family. In terms of assembly, monomer. Requires Zn(2+) as cofactor.

The protein resides in the periplasm. It carries out the reaction Preferential cleavage of 16-Tyr-|-Leu-17 and 25-Phe-|-Tyr-26 bonds of oxidized insulin B chain. Also acts on other substrates of Mw less than 7 kDa such as insulin and glucagon.. Endopeptidase that degrades small peptides of less than 7 kDa, such as glucagon and insulin. This Shigella flexneri protein is Protease 3 (ptrA).